The sequence spans 305 residues: Putative lipid kinase SAB0675c (305 aa).

In terms of domain architecture, DAGKc spans 3-139 (NKYTHGVLFY…YDVIKINNQY (137 aa)). Residues S44, 74–80 (GDGTVNE), and T101 contribute to the ATP site. Mg(2+) contacts are provided by S220, D223, and E225. The active-site Proton acceptor is E281.

It belongs to the diacylglycerol/lipid kinase family. Requires Mg(2+) as cofactor.

Functionally, may catalyze the ATP-dependent phosphorylation of lipids other than diacylglycerol (DAG). This Staphylococcus aureus (strain bovine RF122 / ET3-1) protein is Putative lipid kinase SAB0675c.